A 400-amino-acid chain; its full sequence is CinA-like protein (400 aa).

Belongs to the CinA family.

This Escherichia coli (strain K12 / MC4100 / BW2952) protein is CinA-like protein.